A 179-amino-acid chain; its full sequence is MREKIRSTTVICVRRDNKVVMAGDGQVTLGGEVLKSSARKLRRLYNDKILAGFAGSTADAFALFSRFESKLEQFNGNLSRSVVELAKEWRTDRVLRHLEALLLVSDTKSTYLVSGNGDVIEPDEGIVAIGSGGPFATAAATALLRNTKLSARRIVEESMKIAGEICIYTNQNVTFEELE.

Residue T8 is part of the active site. G163, C166, and T169 together coordinate Na(+).

The protein belongs to the peptidase T1B family. HslV subfamily. In terms of assembly, a double ring-shaped homohexamer of HslV is capped on each side by a ring-shaped HslU homohexamer. The assembly of the HslU/HslV complex is dependent on binding of ATP.

The protein localises to the cytoplasm. The catalysed reaction is ATP-dependent cleavage of peptide bonds with broad specificity.. Its activity is regulated as follows. Allosterically activated by HslU binding. Protease subunit of a proteasome-like degradation complex believed to be a general protein degrading machinery. The sequence is that of ATP-dependent protease subunit HslV from Solibacter usitatus (strain Ellin6076).